The primary structure comprises 185 residues: MIILASHSPRRQELLKRIVPDFESHPASINERALPVLDPPAYVQSLATAKGQSLVPSYPGATIIAADTMVAFQGKLLGKPHDRAEAKQMITALGGQTHQVYTGLWVRLDNGSVRQQVVTTDVTFWPLSEADVESYLAEDAYQDKAGAYGIQDAGALLVKSIHGDFYNVMGLPISTLYRMLLAEPQ.

D67 serves as the catalytic Proton acceptor.

It belongs to the Maf family. YhdE subfamily. Requires a divalent metal cation as cofactor.

The protein resides in the cytoplasm. It catalyses the reaction dTTP + H2O = dTMP + diphosphate + H(+). The catalysed reaction is UTP + H2O = UMP + diphosphate + H(+). Functionally, nucleoside triphosphate pyrophosphatase that hydrolyzes dTTP and UTP. May have a dual role in cell division arrest and in preventing the incorporation of modified nucleotides into cellular nucleic acids. This Lacticaseibacillus casei (strain BL23) (Lactobacillus casei) protein is dTTP/UTP pyrophosphatase.